Consider the following 278-residue polypeptide: MELWPCLAAALLLLLLLVQLSRAAEFYAKVALYCALCFTVSAVASLVCLLRHGGRTVENMSIIGWFVRSFKYFYGLRFEVRDPRRLQEARPCVIVSNHQSILDMMGLMEVLPERCVQIAKRELLFLGPVGLIMYLGGVFFINRQRSSTAMTVMADLGERMVRENLKVWIYPEGTRNDNGDLLPFKKGAFYLAVQAQVPIVPVVYSSFSSFYNTKKKFFTSGTVTVQVLEAIPTSGLTAADVPALVDTCHRAMRTTFLHISKTPQENGATAGSGVQPAQ.

The N-terminal stretch at 1 to 23 (MELWPCLAAALLLLLLLVQLSRA) is a signal peptide. Topologically, residues 24 to 29 (AEFYAK) are lumenal. A helical membrane pass occupies residues 30–50 (VALYCALCFTVSAVASLVCLL). At 51–121 (RHGGRTVENM…PERCVQIAKR (71 aa)) the chain is on the cytoplasmic side. Positions 98–103 (HQSILD) match the HXXXXD motif motif. A helical membrane pass occupies residues 122 to 142 (ELLFLGPVGLIMYLGGVFFIN). Over 143–278 (RQRSSTAMTV…TAGSGVQPAQ (136 aa)) the chain is Lumenal. Residues 172–175 (EGTR) carry the EGTR motif motif.

The protein belongs to the 1-acyl-sn-glycerol-3-phosphate acyltransferase family. In terms of tissue distribution, expressed predominantly in adipose tissue, pancreas and liver.

The protein localises to the endoplasmic reticulum membrane. It catalyses the reaction a 1-acyl-sn-glycero-3-phosphate + an acyl-CoA = a 1,2-diacyl-sn-glycero-3-phosphate + CoA. The enzyme catalyses 1-(9Z-octadecenoyl)-sn-glycero-3-phosphate + (9Z)-octadecenoyl-CoA = 1,2-di-(9Z-octadecenoyl)-sn-glycero-3-phosphate + CoA. The catalysed reaction is 1-(9Z-octadecenoyl)-sn-glycero-3-phosphate + hexadecanoyl-CoA = 1-(9Z)-octadecenoyl-2-hexadecanoyl-sn-glycero-3-phosphate + CoA. It carries out the reaction heptadecanoyl-CoA + 1-(9Z-octadecenoyl)-sn-glycero-3-phosphate = 1-(9Z)-octadecenoyl-2-heptadecanoyl-sn-glycero-3-phosphate + CoA. It catalyses the reaction 1-(9Z-octadecenoyl)-sn-glycero-3-phosphate + (9Z,12Z)-octadecadienoyl-CoA = 1-(9Z)-octadecenoyl-2-(9Z,12Z)-octadecadienoyl-sn-glycero-3-phosphate + CoA. The enzyme catalyses 1-(9Z-octadecenoyl)-sn-glycero-3-phosphate + tetradecanoyl-CoA = 1-(9Z)-octadecenoyl-2-tetradecanoyl-sn-glycero-3-phosphate + CoA. The catalysed reaction is pentadecanoyl-CoA + 1-(9Z-octadecenoyl)-sn-glycero-3-phosphate = 1-(9Z)-octadecenoyl-2-pentadecanoyl-sn-glycero-3-phosphate + CoA. It carries out the reaction 1-hexadecanoyl-sn-glycero-3-phosphate + (9Z)-octadecenoyl-CoA = 1-hexadecanoyl-2-(9Z-octadecenoyl)-sn-glycero-3-phosphate + CoA. It catalyses the reaction 1-tetradecanoyl-sn-glycerol 3-phosphate + (9Z)-octadecenoyl-CoA = 1-tetradecanoyl-2-(9Z)-octadecenoyl-sn-glycero-3-phosphate + CoA. The enzyme catalyses 1-(9Z,12Z,15Z)-octadecatrienoyl-sn-glycero-3-phosphate + (9Z)-octadecenoyl-CoA = 1-(9Z,12Z,15Z)-octadecatrienoyl-2-(9Z)-octadecenoyl-sn-glycero-3-phosphate + CoA. The catalysed reaction is 1-(6Z,9Z,12Z-octadecatrienoyl)-sn-glycero-3-phosphate + (9Z)-octadecenoyl-CoA = (6Z,9Z,12Z)-octadecatrienoyl-2-(9Z)-octadecenoyl-sn-glycero-3-phosphate + CoA. It carries out the reaction 1-eicosanoyl-sn-glycero-3-phosphate + (9Z)-octadecenoyl-CoA = 1-eicosanoyl-2-(9Z)-octadecenoyl-sn-glycero-3-phosphate + CoA. It catalyses the reaction 1-hexadecanoyl-sn-glycero-3-phosphate + octadecanoyl-CoA = 1-hexadecanoyl-2-octadecanoyl-sn-glycero-3-phosphate + CoA. The enzyme catalyses 1-hexadecanoyl-sn-glycero-3-phosphate + (5Z,8Z,11Z,14Z)-eicosatetraenoyl-CoA = 1-hexadecanoyl-2-(5Z,8Z,11Z,14Z-eicosatetraenoyl)-sn-glycero-3-phosphate + CoA. The catalysed reaction is 1-hexadecanoyl-sn-glycero-3-phosphate + hexadecanoyl-CoA = 1,2-dihexadecanoyl-sn-glycero-3-phosphate + CoA. It carries out the reaction 1-hexadecanoyl-sn-glycero-3-phosphate + tetradecanoyl-CoA = 1-hexadecanoyl-2-tetradecanoyl-sn-glycero-3-phosphate + CoA. It catalyses the reaction (11Z)-octadecenoyl-CoA + 1-(9Z-octadecenoyl)-sn-glycero-3-phosphate = 1-(9Z)-octadecenoyl-2-(11Z)-octadecenoyl-sn-glycero-3-phosphate + CoA. It participates in phospholipid metabolism; CDP-diacylglycerol biosynthesis; CDP-diacylglycerol from sn-glycerol 3-phosphate: step 2/3. Converts 1-acyl-sn-glycerol-3-phosphate (lysophosphatidic acid or LPA) into 1,2-diacyl-sn-glycerol-3-phosphate (phosphatidic acid or PA) by incorporating an acyl moiety at the sn-2 position of the glycerol backbone. In Homo sapiens (Human), this protein is 1-acyl-sn-glycerol-3-phosphate acyltransferase beta (AGPAT2).